The chain runs to 212 residues: Peptide methionine sulfoxide reductase MsrA (212 aa).

The active site involves Cys52.

Belongs to the MsrA Met sulfoxide reductase family.

It catalyses the reaction L-methionyl-[protein] + [thioredoxin]-disulfide + H2O = L-methionyl-(S)-S-oxide-[protein] + [thioredoxin]-dithiol. It carries out the reaction [thioredoxin]-disulfide + L-methionine + H2O = L-methionine (S)-S-oxide + [thioredoxin]-dithiol. In terms of biological role, has an important function as a repair enzyme for proteins that have been inactivated by oxidation. Catalyzes the reversible oxidation-reduction of methionine sulfoxide in proteins to methionine. This chain is Peptide methionine sulfoxide reductase MsrA, found in Shigella boydii serotype 18 (strain CDC 3083-94 / BS512).